A 540-amino-acid chain; its full sequence is Homoserine O-acetyltransferase (540 aa).

Residues 66-404 enclose the AB hydrolase-1 domain; it reads NVILICHALT…QHGHDAFLLE (339 aa). Serine 171 serves as the catalytic Nucleophile. Arginine 240 lines the substrate pocket. Residues 262-284 are disordered; it reads QDTDKSGIKGTTGTEGKNSSEIS. Catalysis depends on residues aspartate 365 and histidine 398. Aspartate 399 is a substrate binding site. CBS domains lie at 425 to 484 and 486 to 540; these read MNRN…ELDE and ITRD…GKYD.

This sequence belongs to the AB hydrolase superfamily. MetX family. In terms of assembly, homodimer.

The protein resides in the cytoplasm. The enzyme catalyses L-homoserine + acetyl-CoA = O-acetyl-L-homoserine + CoA. The protein operates within amino-acid biosynthesis; L-methionine biosynthesis via de novo pathway; O-acetyl-L-homoserine from L-homoserine: step 1/1. Its function is as follows. Transfers an acetyl group from acetyl-CoA to L-homoserine, forming acetyl-L-homoserine. In vitro, can also use propionyl-CoA or butiryl-CoA as acyl donor. This Methanosarcina acetivorans (strain ATCC 35395 / DSM 2834 / JCM 12185 / C2A) protein is Homoserine O-acetyltransferase.